A 170-amino-acid polypeptide reads, in one-letter code: 3-isopropylmalate dehydratase small subunit 1 (170 aa).

The protein belongs to the LeuD family. LeuD type 2 subfamily. Heterodimer of LeuC and LeuD.

It catalyses the reaction (2R,3S)-3-isopropylmalate = (2S)-2-isopropylmalate. Its pathway is amino-acid biosynthesis; L-leucine biosynthesis; L-leucine from 3-methyl-2-oxobutanoate: step 2/4. In terms of biological role, catalyzes the isomerization between 2-isopropylmalate and 3-isopropylmalate, via the formation of 2-isopropylmaleate. The polypeptide is 3-isopropylmalate dehydratase small subunit 1 (leuD1) (Methanopyrus kandleri (strain AV19 / DSM 6324 / JCM 9639 / NBRC 100938)).